Consider the following 169-residue polypeptide: ATP synthase subunit b, sodium ion specific (169 aa).

Residues 5-27 traverse the membrane as a helical segment; the sequence is SFISLDWGVVFQIVNTIVMYLIL.

The protein belongs to the ATPase B chain family. F-type ATPases have 2 components, F(1) - the catalytic core - and F(0) - the membrane proton channel. F(1) has five subunits: alpha(3), beta(3), gamma(1), delta(1), epsilon(1). F(0) has three main subunits: a(1), b(2) and c(10-14). The alpha and beta chains form an alternating ring which encloses part of the gamma chain. F(1) is attached to F(0) by a central stalk formed by the gamma and epsilon chains, while a peripheral stalk is formed by the delta and b chains.

The protein localises to the cell membrane. Functionally, f(1)F(0) ATP synthase produces ATP from ADP in the presence of a proton or sodium gradient. F-type ATPases consist of two structural domains, F(1) containing the extramembraneous catalytic core and F(0) containing the membrane proton channel, linked together by a central stalk and a peripheral stalk. During catalysis, ATP synthesis in the catalytic domain of F(1) is coupled via a rotary mechanism of the central stalk subunits to proton translocation. In terms of biological role, component of the F(0) channel, it forms part of the peripheral stalk, linking F(1) to F(0). In this organism this enzyme may function as an ATP-driven Na(+) ion pump to generate a Na(+) ion electrochemical gradient rather than as an ATP synthase. The chain is ATP synthase subunit b, sodium ion specific (atpF) from Clostridium paradoxum.